The following is a 499-amino-acid chain: Putative DUF21 domain-containing protein At1g03270 (499 aa).

Topologically, residues 1–32 (MVVLSTLALVRAAYSLNSFVFEAEDIRFGSPW) are extracellular. The CNNM transmembrane domain occupies 29 to 211 (GSPWWFVVVG…GKGGELTHEE (183 aa)). The helical transmembrane segment at 33 to 53 (WFVVVGVACFLVLFAGIMSGL) threads the bilayer. Topologically, residues 54–91 (TLGLMSLGLVELEILQQSGSSAEKKQAAAILPVVKKQH) are cytoplasmic. The helical transmembrane segment at 92–112 (QLLVTLLLCNAAAMEALPICL) threads the bilayer. Residues 113-114 (DK) lie on the Extracellular side of the membrane. A helical membrane pass occupies residues 115–135 (IFHPFVAVLLSVTFVLAFGEI). Residues 136 to 145 (IPQAICSRYG) are Cytoplasmic-facing. Residues 146 to 166 (LAVGANFLWLVRILMIICYPI) traverse the membrane as a helical segment. Topologically, residues 167–499 (AYPIGKVLDA…TEPLLAESDR (333 aa)) are extracellular. Residue Asn181 is glycosylated (N-linked (GlcNAc...) asparagine). 3 CBS domains span residues 230 to 291 (MTPI…EAPV), 295 to 359 (SIRK…SNLT), and 365 to 431 (HESH…IVDE). Asn357, Asn391, and Asn484 each carry an N-linked (GlcNAc...) asparagine glycan.

It localises to the membrane. This chain is Putative DUF21 domain-containing protein At1g03270 (CBSDUF4), found in Arabidopsis thaliana (Mouse-ear cress).